A 37-amino-acid chain; its full sequence is Esculentin-2SE (37 aa).

Cysteines 31 and 37 form a disulfide.

Expressed by the skin glands.

The protein localises to the secreted. Its function is as follows. Mast cell degranulating peptide. Causes histamine release from rat peritoneal mast cells in vitro. Has antibacterial activity against the Gram-negative bacterium E.coli K12 and Gram-positive bacterium M.luteus NCT C2665. In Lithobates sevosus (Dusky gopher frog), this protein is Esculentin-2SE.